A 164-amino-acid chain; its full sequence is UPF0304 protein YfbU (164 aa).

Belongs to the UPF0304 family.

This Shigella flexneri protein is UPF0304 protein YfbU.